A 79-amino-acid polypeptide reads, in one-letter code: Cytochrome b (79 aa).

The next 3 helical transmembrane spans lie at Thr1–Ala7, Trp31–Ile52, and Trp67–Ala79. 2 residues coordinate heme b: His37 and His51.

The protein belongs to the cytochrome b family. The cytochrome bc1 complex contains 11 subunits: 3 respiratory subunits (MT-CYB, CYC1 and UQCRFS1), 2 core proteins (UQCRC1 and UQCRC2) and 6 low-molecular weight proteins (UQCRH/QCR6, UQCRB/QCR7, UQCRQ/QCR8, UQCR10/QCR9, UQCR11/QCR10 and a cleavage product of UQCRFS1). This cytochrome bc1 complex then forms a dimer. Requires heme b as cofactor.

The protein resides in the mitochondrion inner membrane. Its function is as follows. Component of the ubiquinol-cytochrome c reductase complex (complex III or cytochrome b-c1 complex) that is part of the mitochondrial respiratory chain. The b-c1 complex mediates electron transfer from ubiquinol to cytochrome c. Contributes to the generation of a proton gradient across the mitochondrial membrane that is then used for ATP synthesis. The polypeptide is Cytochrome b (MT-CYB) (Pomatostomus superciliosus (White-browed babbler)).